A 370-amino-acid polypeptide reads, in one-letter code: Probable neutral protease 2 homolog TRV_02539 (370 aa).

The first 19 residues, 1 to 19 (MQLVAALAALGALVAPAVA), serve as a signal peptide directing secretion. Residues 20-188 (YPHAPMNETL…SIHSRALQKR (169 aa)) constitute a propeptide that is removed on maturation. Disulfide bonds link Cys-196–Cys-267 and Cys-274–Cys-292. His-316 is a binding site for Zn(2+). The active site involves Glu-317. Zn(2+) is bound by residues His-320 and Asp-331.

Belongs to the peptidase M35 family. The cofactor is Zn(2+).

It localises to the secreted. The catalysed reaction is Preferential cleavage of bonds with hydrophobic residues in P1'. Also 3-Asn-|-Gln-4 and 8-Gly-|-Ser-9 bonds in insulin B chain.. Probable secreted metalloprotease that shows high activities on basic nuclear substrates such as histone and protamine. May be involved in virulence. The protein is Probable neutral protease 2 homolog TRV_02539 of Trichophyton verrucosum (strain HKI 0517).